Reading from the N-terminus, the 134-residue chain is NADH-quinone oxidoreductase subunit A 1 (134 aa).

Transmembrane regions (helical) follow at residues Leu-10–Ala-30, Phe-65–Trp-85, and Ile-94–Leu-114.

Belongs to the complex I subunit 3 family. NDH-1 is composed of 14 different subunits. Subunits NuoA, H, J, K, L, M, N constitute the membrane sector of the complex.

The protein localises to the cell inner membrane. The enzyme catalyses a quinone + NADH + 5 H(+)(in) = a quinol + NAD(+) + 4 H(+)(out). Its function is as follows. NDH-1 shuttles electrons from NADH, via FMN and iron-sulfur (Fe-S) centers, to quinones in the respiratory chain. The immediate electron acceptor for the enzyme in this species is believed to be ubiquinone. Couples the redox reaction to proton translocation (for every two electrons transferred, four hydrogen ions are translocated across the cytoplasmic membrane), and thus conserves the redox energy in a proton gradient. This is NADH-quinone oxidoreductase subunit A 1 from Citrifermentans bemidjiense (strain ATCC BAA-1014 / DSM 16622 / JCM 12645 / Bem) (Geobacter bemidjiensis).